The sequence spans 493 residues: Putative trans-acting regulator SP_1800 (493 aa).

The protein belongs to the AtxA/AcpA family.

The chain is Putative trans-acting regulator SP_1800 from Streptococcus pneumoniae serotype 4 (strain ATCC BAA-334 / TIGR4).